Here is a 296-residue protein sequence, read N- to C-terminus: uncharacterized protein (296 aa).

Disordered regions lie at residues 1–45 (MSAT…LGEN) and 200–296 (EQVV…SESE). The span at 201–220 (QVVDDYPADSDDDTDAESDD) shows a compositional bias: acidic residues. Polar residues predominate over residues 236–249 (SSVSSCGSFITDGS). Residues 250 to 296 (GSEESEDSASDETDDSDFDTDELTSESEEEESESESESESESESESE) are compositionally biased toward acidic residues.

This is an uncharacterized protein from Ictaluridae (bullhead catfishes).